The chain runs to 642 residues: Arginine--tRNA ligase, chloroplastic/mitochondrial (642 aa).

Residues M1–M53 constitute a chloroplast and mitochondrion transit peptide. A54 carries the N-acetylalanine modification. The 'HIGH' region signature appears at P190–L201.

Belongs to the class-I aminoacyl-tRNA synthetase family.

It localises to the plastid. The protein resides in the chloroplast. The protein localises to the mitochondrion. It carries out the reaction tRNA(Arg) + L-arginine + ATP = L-arginyl-tRNA(Arg) + AMP + diphosphate. Functionally, forms part of a macromolecular complex that catalyzes the attachment of specific amino acids to cognate tRNAs during protein synthesis. This is Arginine--tRNA ligase, chloroplastic/mitochondrial from Arabidopsis thaliana (Mouse-ear cress).